Consider the following 249-residue polypeptide: Probable endopeptidase YafL (249 aa).

The first 17 residues, 1–17, serve as a signal peptide directing secretion; that stretch reads MSLPSIPSFVLSGLLLI. C18 carries N-palmitoyl cysteine lipidation. A lipid anchor (S-diacylglycerol cysteine) is attached at C18. Positions 116–243 constitute a NlpC/P60 domain; sequence HNITEVAIHR…DHFLGARRIL (128 aa). C147 serves as the catalytic Nucleophile. The active-site Proton acceptor is the H202. The active site involves E214.

This sequence belongs to the peptidase C40 family.

It localises to the cell membrane. This chain is Probable endopeptidase YafL (yafL), found in Escherichia coli (strain K12).